Here is a 508-residue protein sequence, read N- to C-terminus: Photosystem II CP47 reaction center protein (508 aa).

Helical transmembrane passes span 21-36, 101-115, 140-156, 203-218, 237-252, and 457-472; these read AVHIMHTALVAGWAGS, IVFSGLCFLAAIWHW, GIHLFLSGVACFGFGAF, IAAGTLGILAGLFHLS, VLSSSIAAVFFAAFVV, and SFALLFFFGHIWHGAR.

It belongs to the PsbB/PsbC family. PsbB subfamily. PSII is composed of 1 copy each of membrane proteins PsbA, PsbB, PsbC, PsbD, PsbE, PsbF, PsbH, PsbI, PsbJ, PsbK, PsbL, PsbM, PsbT, PsbX, PsbY, PsbZ, Psb30/Ycf12, at least 3 peripheral proteins of the oxygen-evolving complex and a large number of cofactors. It forms dimeric complexes. Binds multiple chlorophylls. PSII binds additional chlorophylls, carotenoids and specific lipids. serves as cofactor.

The protein resides in the plastid. Its subcellular location is the chloroplast thylakoid membrane. One of the components of the core complex of photosystem II (PSII). It binds chlorophyll and helps catalyze the primary light-induced photochemical processes of PSII. PSII is a light-driven water:plastoquinone oxidoreductase, using light energy to abstract electrons from H(2)O, generating O(2) and a proton gradient subsequently used for ATP formation. This is Photosystem II CP47 reaction center protein from Buxus microphylla (Littleleaf boxwood).